A 328-amino-acid chain; its full sequence is Arabinose 5-phosphate isomerase KdsD (328 aa).

In terms of domain architecture, SIS spans 42-184; that stretch reads CEKMFWCKGK…AVALLKARGF (143 aa). Residues 75 to 76, histidine 82, histidine 88, 114 to 123, 148 to 150, threonine 222, and aspartate 275 each bind substrate; these read GT, ALIPVLKRLH, and KVA. Histidine 82 serves as a coordination point for Zn(2+). In terms of domain architecture, CBS 1 spans 210–268; it reads MHTGDEIPHVKKTASLRDALLEVTRKNLGMTVICDDNMMIEGIFTDGDLRRVFDMGVDV. A CBS 2 domain is found at 277–328; it reads MTPGGIRVRPGILAVEALNLMQSRHITSVMVADGDHLLGVLHMHDLLRAGVV.

The protein belongs to the SIS family. GutQ/KpsF subfamily. Homotetramer.

It catalyses the reaction D-arabinose 5-phosphate = D-ribulose 5-phosphate. Its pathway is carbohydrate biosynthesis; 3-deoxy-D-manno-octulosonate biosynthesis; 3-deoxy-D-manno-octulosonate from D-ribulose 5-phosphate: step 1/3. It participates in bacterial outer membrane biogenesis; lipopolysaccharide biosynthesis. Its activity is regulated as follows. Completely inhibited by 10 uM of nickel, copper, cadmium and mercury ions. Inhibited by zinc with an IC(50) of 1-3 uM. Metal ion inhibition may be a mechanism to control activity in vivo. Involved in the biosynthesis of 3-deoxy-D-manno-octulosonate (KDO), a unique 8-carbon sugar component of lipopolysaccharides (LPSs). KdsD is not essential in the KDO biosynthesis and can be substituted by GutQ. Catalyzes the reversible aldol-ketol isomerization between D-ribulose 5-phosphate (Ru5P) and D-arabinose 5-phosphate (A5P). The sequence is that of Arabinose 5-phosphate isomerase KdsD (kdsD) from Escherichia coli (strain K12).